We begin with the raw amino-acid sequence, 831 residues long: Probable beta-glucosidase H (831 aa).

A glycan (N-linked (GlcNAc...) asparagine) is linked at asparagine 13. Aspartate 225 is a catalytic residue. One can recognise a PA14 domain in the interval 389–549 (RLLSNAVIHF…DAEEMINRAV (161 aa)). Residues asparagine 474, asparagine 514, asparagine 604, asparagine 629, asparagine 726, and asparagine 823 are each glycosylated (N-linked (GlcNAc...) asparagine).

Belongs to the glycosyl hydrolase 3 family.

It is found in the secreted. It carries out the reaction Hydrolysis of terminal, non-reducing beta-D-glucosyl residues with release of beta-D-glucose.. It participates in glycan metabolism; cellulose degradation. Functionally, beta-glucosidases are one of a number of cellulolytic enzymes involved in the degradation of cellulosic biomass. Catalyzes the last step releasing glucose from the inhibitory cellobiose. The polypeptide is Probable beta-glucosidase H (bglH) (Emericella nidulans (strain FGSC A4 / ATCC 38163 / CBS 112.46 / NRRL 194 / M139) (Aspergillus nidulans)).